Consider the following 288-residue polypeptide: uncharacterized protein (288 aa).

To M.bovis Mb1522c, M.leprae ML1804 and M.avium MAV321.

This is an uncharacterized protein from Mycobacterium tuberculosis (strain ATCC 25618 / H37Rv).